We begin with the raw amino-acid sequence, 685 residues long: Twinkle mtDNA helicase (685 aa).

The transit peptide at 1–31 (MWLLLRRAYPLRILLPLRGEWVGRRGLPRSL) directs the protein to the mitochondrion. A contributes to single strand DNA binding activity region spans residues 1–122 (MWLLLRRAYP…LCMTSLAEGS (122 aa)). Residues 54–214 (PVTTTEIRQY…LVFPWFTPGS (161 aa)) form an N-terminal region (NTR) region. The interval 122–373 (SWEDLQASVE…WHKSIVSFRQ (252 aa)) is required for hexamers formation and DNA helicase activity. The tract at residues 215–335 (SGLRGLKLLG…LNPKRCSLVR (121 aa)) is primase-like domain. Residues 385 to 636 (VEQAAGVRWS…LTFSIPPKSK (252 aa)) form the SF4 helicase domain. The maybe required for stable oligomeric structure stretch occupies residues 406–591 (HRKGELTVFT…QEADNVLILQ (186 aa)). 416-423 (GPTGSGKT) contributes to the ATP binding site. Residues 454 to 482 (RVMLTQFAVTRLEEQLDKYEEWADRFEDL) adopt a coiled-coil conformation. The tract at residues 641–685 (KIKDDNGLVAKKSSSGKKGAAHQNPEICLGQDPSPAQPDTSKSSG) is might negatively regulate ATPase activity. The segment at 642 to 685 (IKDDNGLVAKKSSSGKKGAAHQNPEICLGQDPSPAQPDTSKSSG) is disordered.

As to quaternary structure, homohexamer (via C-terminus), which assembles in a ring-like structure. Homoheptamer, which assembles in a ring-like structure. Homooctamer, which assembles in a ring-like structure. Oligomers may sequentially eject two monomers (octamer&gt;heptamer&gt;hexamer) upon DNA binding. Oligomerization is Mg(2+), nucleotide and DNA-independent, however, Mg(2+) and nucleotide stabilize the homohexameric form. Interacts with POLG in vitro. Interacts with LONP1. In terms of tissue distribution, ubiquitous with the highest levels in the liver, heart and kidneys. The skeletal muscle, brain and testis showed lower but detectable expression. Expression is coregulated with MRPL43.

It is found in the mitochondrion matrix. Its subcellular location is the mitochondrion nucleoid. The protein resides in the mitochondrion inner membrane. It catalyses the reaction ATP + H2O = ADP + phosphate + H(+). The enzyme catalyses Couples ATP hydrolysis with the unwinding of duplex DNA at the replication fork by translocating in the 5'-3' direction. This creates two antiparallel DNA single strands (ssDNA). The leading ssDNA polymer is the template for DNA polymerase III holoenzyme which synthesizes a continuous strand.. Mitochondrial helicase involved in mtDNA replication and repair. Might have a role in mtDNA repair. Has DNA strand separation activity needed to form a processive replication fork for leading strand synthesis which is catalyzed by the formation of a replisome complex with POLG and mtSDB. Preferentially unwinds DNA substrates with pre-existing 5'-and 3'- single-stranded tails but is also active on a 5'- flap substrate. Can dissociate the invading strand of immobile or mobile D-loop DNA structures irrespective of the single strand polarity of the third strand. In addition to its DNA strand separation activity, also has DNA strand annealing, DNA strand-exchange and DNA branch migration activities. The protein is Twinkle mtDNA helicase of Mus musculus (Mouse).